Here is a 955-residue protein sequence, read N- to C-terminus: Glycine dehydrogenase (decarboxylating) (955 aa).

An N6-(pyridoxal phosphate)lysine modification is found at Lys702.

It belongs to the GcvP family. As to quaternary structure, the glycine cleavage system is composed of four proteins: P, T, L and H. Pyridoxal 5'-phosphate is required as a cofactor.

It carries out the reaction N(6)-[(R)-lipoyl]-L-lysyl-[glycine-cleavage complex H protein] + glycine + H(+) = N(6)-[(R)-S(8)-aminomethyldihydrolipoyl]-L-lysyl-[glycine-cleavage complex H protein] + CO2. The glycine cleavage system catalyzes the degradation of glycine. The P protein binds the alpha-amino group of glycine through its pyridoxal phosphate cofactor; CO(2) is released and the remaining methylamine moiety is then transferred to the lipoamide cofactor of the H protein. The sequence is that of Glycine dehydrogenase (decarboxylating) from Bordetella avium (strain 197N).